The following is a 210-amino-acid chain: Small ribosomal subunit protein eS8y (210 aa).

The interval 1–22 is disordered; it reads MGISRDSIHKRRATGGKQKMWR. Over residues 8–22 the composition is skewed to basic residues; the sequence is IHKRRATGGKQKMWR.

Belongs to the eukaryotic ribosomal protein eS8 family.

The polypeptide is Small ribosomal subunit protein eS8y (RPS8B) (Arabidopsis thaliana (Mouse-ear cress)).